Here is a 549-residue protein sequence, read N- to C-terminus: Glucose-6-phosphate isomerase (549 aa).

E354 functions as the Proton donor in the catalytic mechanism. Catalysis depends on residues H385 and K513.

Belongs to the GPI family.

The protein resides in the cytoplasm. The enzyme catalyses alpha-D-glucose 6-phosphate = beta-D-fructose 6-phosphate. It functions in the pathway carbohydrate biosynthesis; gluconeogenesis. It participates in carbohydrate degradation; glycolysis; D-glyceraldehyde 3-phosphate and glycerone phosphate from D-glucose: step 2/4. Catalyzes the reversible isomerization of glucose-6-phosphate to fructose-6-phosphate. This is Glucose-6-phosphate isomerase from Nitrosococcus oceani (strain ATCC 19707 / BCRC 17464 / JCM 30415 / NCIMB 11848 / C-107).